A 503-amino-acid chain; its full sequence is Cytochrome c lysine N-methyltransferase 1 (503 aa).

In terms of domain architecture, SET spans Ser-52 to Ala-276. Residues Asn-190–Leu-291 form an SET-like region.

It belongs to the class V-like SAM-binding methyltransferase superfamily.

It localises to the cytoplasm. It is found in the cytosol. The catalysed reaction is L-lysyl-[cytochrome c] + S-adenosyl-L-methionine = N(6)-methyl-L-lysyl-[cytochrome c] + S-adenosyl-L-homocysteine + H(+). In terms of biological role, methyltransferase which mediates trimethylation of cytochrome c (CYC1). This chain is Cytochrome c lysine N-methyltransferase 1 (CTM1), found in Kluyveromyces lactis (strain ATCC 8585 / CBS 2359 / DSM 70799 / NBRC 1267 / NRRL Y-1140 / WM37) (Yeast).